The sequence spans 620 residues: Synchronized import protein 1 (620 aa).

The interval 1–32 is disordered; sequence MGRSKKRSRASSSRLNPLRKAGSNDNNKDTNV. 8 ARM repeats span residues 25–64, 66–106, 181–221, 258–299, 340–386, 435–470, 471–510, and 564–607; these read DNNKDTNVVNKKLQPLLQNLSSVVPNDRSIALSSISVLCE, AHMR…NLSL, DDIL…TTLD, ANEL…NIDP, IKLQ…NFLP, DSQDDLSIKIGRMGCIWALLKLIFPDGAFESENRAL, INVQMLNNSGFARGIIEEFQNNNDLELQQKCINVLSTYAM, and RGGF…TLDS.

The protein belongs to the nuclear import and ribosome assembly adapter family. In terms of assembly, forms a heterotrimeric complex with RPL5 and RPL11A or RPL11B; interaction of this complex with KAP104 allows the nuclear import of the heterotrimer. Component of a hexameric 5S RNP precursor complex, composed of 5S RNA, RRS1, RPF2, RPL5, RPL11A/RPL11B and SYO1; this complex acts as a precursor for ribosome assembly.

It localises to the cytoplasm. Its subcellular location is the nucleus. In terms of biological role, nuclear import adapter that specifically recruits the two functionally and topologically linked ribosomal proteins RPL5 and RPL11 (encoded by RPL11A and RPL11B). Guarantees that this cargo pair remains bound together from the time of synthesis in the cytoplasm until delivery to the nascent 5S rRNA in the nucleus. The polypeptide is Synchronized import protein 1 (SYO1) (Saccharomyces cerevisiae (strain ATCC 204508 / S288c) (Baker's yeast)).